A 103-amino-acid chain; its full sequence is Small ribosomal subunit protein uS10 (103 aa).

It belongs to the universal ribosomal protein uS10 family. Part of the 30S ribosomal subunit.

Its function is as follows. Involved in the binding of tRNA to the ribosomes. The chain is Small ribosomal subunit protein uS10 from Shewanella frigidimarina (strain NCIMB 400).